A 390-amino-acid chain; its full sequence is Putative glutamate--cysteine ligase 2 (390 aa).

The protein belongs to the glutamate--cysteine ligase type 2 family. YbdK subfamily.

The catalysed reaction is L-cysteine + L-glutamate + ATP = gamma-L-glutamyl-L-cysteine + ADP + phosphate + H(+). ATP-dependent carboxylate-amine ligase which exhibits weak glutamate--cysteine ligase activity. The sequence is that of Putative glutamate--cysteine ligase 2 from Chloroflexus aggregans (strain MD-66 / DSM 9485).